The chain runs to 161 residues: MKNNNVTEKELFYILDLFEHMKVTYWLDGGWGVDVLTGKQQREHRDIDIDFDAQHTQKVIQKLEDIGYKIEVHWMPSRMELKHEEYGYLDIHPINLNDDGSITQANPEGGNYVFQNDWFSETNYKDRKIPCISKEAQLLFHSGYDLTETDHFDIKNLKSIT.

In Staphylococcus haemolyticus, this protein is Lincosamide resistance protein (linA).